Here is a 179-residue protein sequence, read N- to C-terminus: Cell division protein SepF (179 aa).

The disordered stretch occupies residues 18-57; it reads EDSTVPYEKGNEPVFTPVNSSQEPDLPMNQPSQSAGAKDS. The segment covering 34 to 57 has biased composition (polar residues); that stretch reads PVNSSQEPDLPMNQPSQSAGAKDS.

Belongs to the SepF family. In terms of assembly, homodimer. Interacts with FtsZ.

Its subcellular location is the cytoplasm. Its function is as follows. Cell division protein that is part of the divisome complex and is recruited early to the Z-ring. Probably stimulates Z-ring formation, perhaps through the cross-linking of FtsZ protofilaments. Its function overlaps with FtsA. This is Cell division protein SepF from Streptococcus pneumoniae (strain Hungary19A-6).